The chain runs to 194 residues: dCTP deaminase (194 aa).

DCTP contacts are provided by residues 110 to 115 (RSSLAR), D128, 136 to 138 (VLE), Y171, K178, and Q182. Residue E138 is the Proton donor/acceptor of the active site.

Belongs to the dCTP deaminase family. Homotrimer.

The enzyme catalyses dCTP + H2O + H(+) = dUTP + NH4(+). It functions in the pathway pyrimidine metabolism; dUMP biosynthesis; dUMP from dCTP (dUTP route): step 1/2. Functionally, catalyzes the deamination of dCTP to dUTP. The sequence is that of dCTP deaminase from Glaesserella parasuis serovar 5 (strain SH0165) (Haemophilus parasuis).